A 174-amino-acid chain; its full sequence is Peptide methionine sulfoxide reductase MsrA (174 aa).

The active site involves Cys-11.

This sequence belongs to the MsrA Met sulfoxide reductase family.

It carries out the reaction L-methionyl-[protein] + [thioredoxin]-disulfide + H2O = L-methionyl-(S)-S-oxide-[protein] + [thioredoxin]-dithiol. The catalysed reaction is [thioredoxin]-disulfide + L-methionine + H2O = L-methionine (S)-S-oxide + [thioredoxin]-dithiol. In terms of biological role, has an important function as a repair enzyme for proteins that have been inactivated by oxidation. Catalyzes the reversible oxidation-reduction of methionine sulfoxide in proteins to methionine. This Haloquadratum walsbyi (strain DSM 16790 / HBSQ001) protein is Peptide methionine sulfoxide reductase MsrA.